The primary structure comprises 312 residues: Homoserine O-acetyltransferase (312 aa).

The active-site Acyl-thioester intermediate is Cys-142. 2 residues coordinate substrate: Lys-163 and Ser-192. The active-site Proton acceptor is His-235. The active site involves Glu-237. Residue Arg-249 coordinates substrate.

This sequence belongs to the MetA family.

The protein resides in the cytoplasm. It carries out the reaction L-homoserine + acetyl-CoA = O-acetyl-L-homoserine + CoA. Its pathway is amino-acid biosynthesis; L-methionine biosynthesis via de novo pathway; O-acetyl-L-homoserine from L-homoserine: step 1/1. Transfers an acetyl group from acetyl-CoA to L-homoserine, forming acetyl-L-homoserine. This is Homoserine O-acetyltransferase from Ruegeria pomeroyi (strain ATCC 700808 / DSM 15171 / DSS-3) (Silicibacter pomeroyi).